An 851-amino-acid polypeptide reads, in one-letter code: Periplasmic nitrate reductase (851 aa).

A signal peptide (tat-type signal) is located at residues 1 to 29 (MQSNRRDFLKAQALAASAAAAGIPIVVEA). The 4Fe-4S Mo/W bis-MGD-type domain occupies 44–100 (VRWDKAPCRFCGTGCAVMVGVQEGKVVATQGDPEAPVNRGLNCIKGYFLSKIMYGRD). Residues cysteine 51, cysteine 54, cysteine 58, and cysteine 86 each contribute to the [4Fe-4S] cluster site. Residues lysine 88, glutamine 155, asparagine 180, cysteine 184, 217–224 (WGSNMAEM), 248–252 (STYEH), and 267–269 (QTD) each bind Mo-bis(molybdopterin guanine dinucleotide). Residues 317-338 (DATSNGYPGADGKPKGNPNDST) are disordered. Mo-bis(molybdopterin guanine dinucleotide) is bound by residues methionine 388, glutamine 392, asparagine 498, 524–525 (SD), lysine 547, aspartate 574, and 741–750 (TGRVLEHWHT). Phenylalanine 817 contributes to the substrate binding site. Mo-bis(molybdopterin guanine dinucleotide)-binding residues include asparagine 825 and lysine 842.

The protein belongs to the prokaryotic molybdopterin-containing oxidoreductase family. NasA/NapA/NarB subfamily. Component of the periplasmic nitrate reductase NapAB complex composed of NapA and NapB. Requires [4Fe-4S] cluster as cofactor. Mo-bis(molybdopterin guanine dinucleotide) is required as a cofactor. Post-translationally, predicted to be exported by the Tat system. The position of the signal peptide cleavage has not been experimentally proven.

It is found in the periplasm. The enzyme catalyses 2 Fe(II)-[cytochrome] + nitrate + 2 H(+) = 2 Fe(III)-[cytochrome] + nitrite + H2O. Its function is as follows. Catalytic subunit of the periplasmic nitrate reductase complex NapAB. Receives electrons from NapB and catalyzes the reduction of nitrate to nitrite. The polypeptide is Periplasmic nitrate reductase (Leptothrix cholodnii (strain ATCC 51168 / LMG 8142 / SP-6) (Leptothrix discophora (strain SP-6))).